The chain runs to 165 residues: UPF0303 protein Rleg2_2653 (165 aa).

The protein belongs to the UPF0303 family.

The protein is UPF0303 protein Rleg2_2653 of Rhizobium leguminosarum bv. trifolii (strain WSM2304).